Consider the following 463-residue polypeptide: Kynurenine 3-monooxygenase (463 aa).

It belongs to the aromatic-ring hydroxylase family. KMO subfamily. Requires FAD as cofactor.

The protein resides in the mitochondrion outer membrane. The enzyme catalyses L-kynurenine + NADPH + O2 + H(+) = 3-hydroxy-L-kynurenine + NADP(+) + H2O. It participates in cofactor biosynthesis; NAD(+) biosynthesis; quinolinate from L-kynurenine: step 1/3. Functionally, catalyzes the hydroxylation of L-kynurenine (L-Kyn) to form 3-hydroxy-L-kynurenine (L-3OHKyn). Required for synthesis of quinolinic acid. The sequence is that of Kynurenine 3-monooxygenase from Yarrowia lipolytica (strain CLIB 122 / E 150) (Yeast).